The chain runs to 952 residues: 2-oxoglutarate dehydrogenase E1 component (952 aa).

The protein belongs to the alpha-ketoglutarate dehydrogenase family. In terms of assembly, homodimer. Part of the 2-oxoglutarate dehydrogenase (OGDH) complex composed of E1 (2-oxoglutarate dehydrogenase), E2 (dihydrolipoamide succinyltransferase) and E3 (dihydrolipoamide dehydrogenase); the complex contains multiple copies of the three enzymatic components (E1, E2 and E3). The cofactor is thiamine diphosphate.

It carries out the reaction N(6)-[(R)-lipoyl]-L-lysyl-[protein] + 2-oxoglutarate + H(+) = N(6)-[(R)-S(8)-succinyldihydrolipoyl]-L-lysyl-[protein] + CO2. Its function is as follows. E1 component of the 2-oxoglutarate dehydrogenase (OGDH) complex which catalyzes the decarboxylation of 2-oxoglutarate, the first step in the conversion of 2-oxoglutarate to succinyl-CoA and CO(2). In Geobacillus sp. (strain WCH70), this protein is 2-oxoglutarate dehydrogenase E1 component.